Here is a 158-residue protein sequence, read N- to C-terminus: MPLTHLNEENQPKMVDIGDKETTERIALASGRISMNKEAYDAIVNHCVKKGPVLQTAIIAGIMGAKKTSELIPMCHSIMLNGVDIDILEEKETHSFKLYARVKTQAKTGVEMEALMSVSIGLLTIYDMVKAIDKSMTISGVMLEHKSGGKSGDYNAKK.

Residues 74–76 (MCH) and 112–113 (ME) contribute to the substrate site. Aspartate 127 is an active-site residue.

It belongs to the MoaC family. As to quaternary structure, homohexamer; trimer of dimers.

It catalyses the reaction (8S)-3',8-cyclo-7,8-dihydroguanosine 5'-triphosphate = cyclic pyranopterin phosphate + diphosphate. It functions in the pathway cofactor biosynthesis; molybdopterin biosynthesis. Catalyzes the conversion of (8S)-3',8-cyclo-7,8-dihydroguanosine 5'-triphosphate to cyclic pyranopterin monophosphate (cPMP). This is Cyclic pyranopterin monophosphate synthase from Helicobacter pylori (strain Shi470).